The chain runs to 913 residues: Striatin-interacting protein homolog (913 aa).

3 stretches are compositionally biased toward low complexity: residues 177 to 188 (QQQQQQQQNENE), 195 to 204 (TNFTTTTTTT), and 791 to 811 (NNNNSNNNNNNNNNNSTNNDN). 2 disordered regions span residues 177 to 204 (QQQQQQQQNENEGSGEGGTNFTTTTTTT) and 791 to 814 (NNNNSNNNNNNNNNNSTNNDNGLT).

This sequence belongs to the STRIP family.

This chain is Striatin-interacting protein homolog (fam40), found in Dictyostelium discoideum (Social amoeba).